The chain runs to 157 residues: Crossover junction endodeoxyribonuclease RuvC (157 aa).

Residues Asp7, Glu66, and Asp139 contribute to the active site. Positions 7, 66, and 139 each coordinate Mg(2+).

The protein belongs to the RuvC family. Homodimer which binds Holliday junction (HJ) DNA. The HJ becomes 2-fold symmetrical on binding to RuvC with unstacked arms; it has a different conformation from HJ DNA in complex with RuvA. In the full resolvosome a probable DNA-RuvA(4)-RuvB(12)-RuvC(2) complex forms which resolves the HJ. It depends on Mg(2+) as a cofactor.

It is found in the cytoplasm. It carries out the reaction Endonucleolytic cleavage at a junction such as a reciprocal single-stranded crossover between two homologous DNA duplexes (Holliday junction).. In terms of biological role, the RuvA-RuvB-RuvC complex processes Holliday junction (HJ) DNA during genetic recombination and DNA repair. Endonuclease that resolves HJ intermediates. Cleaves cruciform DNA by making single-stranded nicks across the HJ at symmetrical positions within the homologous arms, yielding a 5'-phosphate and a 3'-hydroxyl group; requires a central core of homology in the junction. The consensus cleavage sequence is 5'-(A/T)TT(C/G)-3'. Cleavage occurs on the 3'-side of the TT dinucleotide at the point of strand exchange. HJ branch migration catalyzed by RuvA-RuvB allows RuvC to scan DNA until it finds its consensus sequence, where it cleaves and resolves the cruciform DNA. The sequence is that of Crossover junction endodeoxyribonuclease RuvC from Helicobacter pylori (strain P12).